We begin with the raw amino-acid sequence, 258 residues long: MVLIRVLANLLILQLSYAQKSSELVVGGRPCNINEHRSLVVLFNSSGFLCGGTLINQDWVVTAAHCDSNNFQMIFGVHSKNVPNEDEQRRVPKEKFFCDSNKNYTQWNKDIMLIRLNSPVNNSTHIAPLSLPSSPPIVGSVCRIMGWGTITFPNETYPDVPHCANINLFNYTVCHGAHAGLPATSRTLCAGVLEGGKDTCKGDSGGPLICNGQFQGIVSWGGHPCAQPREPGVYTKVFDHLDWIQNIIAGNTTATCPL.

Residues 1 to 18 (MVLIRVLANLLILQLSYA) form the signal peptide. A propeptide spanning residues 19 to 24 (QKSSEL) is cleaved from the precursor. One can recognise a Peptidase S1 domain in the interval 25–249 (VVGGRPCNIN…HLDWIQNIIA (225 aa)). 6 cysteine pairs are disulfide-bonded: Cys31/Cys163, Cys50/Cys66, Cys98/Cys256, Cys142/Cys210, Cys174/Cys189, and Cys200/Cys225. A glycan (N-linked (GlcNAc...) asparagine) is linked at Asn44. Residue His65 is the Charge relay system of the active site. The N-linked (GlcNAc...) asparagine glycan is linked to Asn103. Catalysis depends on Asp110, which acts as the Charge relay system. Residues Asn121, Asn122, Asn154, and Asn170 are each glycosylated (N-linked (GlcNAc...) asparagine). The active-site Charge relay system is Ser204. An N-linked (GlcNAc...) asparagine glycan is attached at Asn251.

The protein belongs to the peptidase S1 family. Snake venom subfamily. Monomer. Expressed by the venom gland.

Its subcellular location is the secreted. Functionally, snake venom serine protease that may act in the hemostasis system of the prey. The sequence is that of Snake venom serine protease 5 from Trimeresurus stejnegeri (Chinese green tree viper).